The sequence spans 407 residues: Arginine deiminase (407 aa).

Cys-397 functions as the Amidino-cysteine intermediate in the catalytic mechanism.

It belongs to the arginine deiminase family.

Its subcellular location is the cytoplasm. It catalyses the reaction L-arginine + H2O = L-citrulline + NH4(+). The protein operates within amino-acid degradation; L-arginine degradation via ADI pathway; carbamoyl phosphate from L-arginine: step 1/2. This is Arginine deiminase from Vibrio parahaemolyticus serotype O3:K6 (strain RIMD 2210633).